Here is a 314-residue protein sequence, read N- to C-terminus: MAAAAPGALGALRTGRVRLVAACCARLGPAAWARGTAPRRGYSSEVKTEDELRVRHLEEENRGIVVLGINRAYGKNALSKNLLKMLSKAVDALKSDKKVRTIIIRSEVPGIFCAGADLKERAKMHSSEVGPFVSKIRSVINDIANLPVPTIAAIDGLALGGGLELALACDIRVAASSAKMGLVETKLAIIPGGGGTQRLPRAIGMSLAKELIFSARVLDGQEAKAVGLISHVLEQNQEGDAAYRKALDLAREFLPQGPVAMRVAKLAINQGMEVDLVTGLAIEEACYAQTISTKDRLEGLLAFKEKRPPRYKGE.

A mitochondrion-targeting transit peptide spans 1 to 42 (MAAAAPGALGALRTGRVRLVAACCARLGPAAWARGTAPRRGY). Residue K75 is modified to N6-acetyllysine; alternate. N6-succinyllysine; alternate is present on K75. Residues 80–94 (KNLLKMLSKAVDALK) form an RNA-binding region. Position 84 is an N6-succinyllysine (K84). N6-acetyllysine; alternate occurs at positions 88 and 119. Residues K88 and K119 each carry the N6-succinyllysine; alternate modification. N6-succinyllysine is present on residues K123 and K135. N6-acetyllysine; alternate occurs at positions 179 and 186. An N6-succinyllysine; alternate mark is found at K179 and K186. The residue at position 304 (K304) is an N6-succinyllysine.

Belongs to the enoyl-CoA hydratase/isomerase family. Homohexamer. In terms of tissue distribution, detected in heart, brain, liver, spleen, skeletal muscle and kidney. Expressed in brain, kidney, liver and spleen tissue (at protein level).

It localises to the mitochondrion. It catalyses the reaction (3S)-3-hydroxy-3-methylglutaryl-CoA = 3-methyl-(2E)-glutaconyl-CoA + H2O. The catalysed reaction is (3S)-citramalyl-CoA = itaconyl-CoA + H2O. The enzyme catalyses 3-hydroxyisovaleryl-CoA = 3-methylbut-2-enoyl-CoA + H2O. It carries out the reaction (S)-3-hydroxyglutaryl-CoA = (2E)-glutaconyl-CoA + H2O. It functions in the pathway amino-acid degradation; L-leucine degradation; (S)-3-hydroxy-3-methylglutaryl-CoA from 3-isovaleryl-CoA: step 3/3. Functionally, catalyzes the fifth step in the leucine degradation pathway, the reversible hydration of 3-methylglutaconyl-CoA (3-MG-CoA) to 3-hydroxy-3-methylglutaryl-CoA (HMG-CoA). Can catalyze the reverse reaction but at a much lower rate in vitro. HMG-CoA is then quickly degraded by another enzyme (such as HMG-CoA lyase) to give acetyl-CoA and acetoacetate. Uses other substrates such as (2E)-glutaconyl-CoA efficiently in vitro, and to a lesser extent 3-methylcrotonyl-CoA (3-methyl-(2E)-butenoyl-CoA), crotonyl-CoA ((2E)-butenoyl-CoA) and 3-hydroxybutanoyl-CoA (the missing carboxylate reduces affinity to the active site). Originally it was identified as an RNA-binding protein as it binds to AU-rich elements (AREs) in vitro. AREs direct rapid RNA degradation and mRNA deadenylation. Might have itaconyl-CoA hydratase activity, converting itaconyl-CoA into citramalyl-CoA in the C5-dicarboxylate catabolism pathway. The C5-dicarboxylate catabolism pathway is required to detoxify itaconate, an antimicrobial metabolite and immunomodulator produced by macrophages during certain infections, that can act as a vitamin B12-poisoning metabolite. The polypeptide is Methylglutaconyl-CoA hydratase, mitochondrial (Auh) (Mus musculus (Mouse)).